The sequence spans 130 residues: METPLKEPESSLESYNEPSSCTSERDVTAQERAKQGEELLAQLHRPLEACTNSCYCKQCSYHCQLCFLKKGLGIWYARQGRRRRTPRKTKTHPPPASDKSISTRTGDSQPTKKQKKTPETTVVSACGLGH.

A disordered region spans residues 1-33 (METPLKEPESSLESYNEPSSCTSERDVTAQERA). Residues 11–22 (SLESYNEPSSCT) show a composition bias toward polar residues. Positions 23–33 (SERDVTAQERA) are enriched in basic and acidic residues. The interval 50 to 66 (CTNSCYCKQCSYHCQLC) is cysteine-rich. A core region spans residues 67 to 77 (FLKKGLGIWYA). The short motif at 78–90 (RQGRRRRTPRKTK) is the Nuclear localization signal, and RNA-binding (TAR) element. The interval 78–130 (RQGRRRRTPRKTKTHPPPASDKSISTRTGDSQPTKKQKKTPETTVVSACGLGH) is disordered. The segment covering 79 to 91 (QGRRRRTPRKTKT) has biased composition (basic residues). Phosphothreonine; by host CDK9 is present on residues T85 and T89. Positions 99-108 (KSISTRTGDS) are enriched in polar residues.

It belongs to the lentiviruses Tat family. As to quaternary structure, binds human CCNT1. Also binds to CCNT2, but the resulting complex is unable to bind to TAR RNA. May participate in the formation of a complex composed at least of Tat, P-TEFb, TAR RNA, RNA Pol II. In terms of processing, the phosphorylation by CDK9 does not seem to be important for transactivation function.

The protein localises to the host nucleus. It is found in the host nucleolus. Transcriptional activator that increases RNA Pol II processivity, thereby increasing the level of full-length viral transcripts. Recognizes a hairpin structure at the 5'-LTR of the nascent viral mRNAs referred to as the transactivation responsive RNA element (TAR) and recruits the cyclin T1-CDK9 complex (P-TEFb complex) that will in turn hyperphosphorylate the RNA polymerase II to allow efficient elongation. The CDK9 component of P-TEFb and other Tat-activated kinases hyperphosphorylate the C-terminus of RNA Pol II that becomes stabilized and much more processive. Its function is as follows. Extracellular circulating Tat can be endocytosed by surrounding uninfected cells via the binding to several surface receptors. Endosomal low pH allows Tat to cross the endosome membrane to enter the cytosol and eventually further translocate into the nucleus, thereby inducing severe cell dysfunctions ranging from cell activation to cell death. Through. This is Protein Tat (tat) from Human immunodeficiency virus type 2 subtype A (isolate D194) (HIV-2).